Here is a 170-residue protein sequence, read N- to C-terminus: Putative zinc finger protein 542 (170 aa).

The KRAB domain occupies 1–42 (MLENYQNLVWLGLSISKSVISLLEKRKLPWIMAKEEIRGPLP). 2 C2H2-type zinc fingers span residues 98 to 120 (NVCK…KRNH) and 126 to 148 (NQCL…QRIH). A C2H2-type 3; degenerate zinc finger spans residues 154 to 170 (YKCNECIKTFNQRAHLT).

Belongs to the krueppel C2H2-type zinc-finger protein family.

The protein localises to the nucleus. Functionally, may be involved in transcriptional regulation. The sequence is that of Putative zinc finger protein 542 (ZNF542P) from Homo sapiens (Human).